Here is a 418-residue protein sequence, read N- to C-terminus: Deubiquitinase and deneddylase Dub1 (418 aa).

A compositionally biased stretch (polar residues) spans 1–10 (MLSPTNSISK). The tract at residues 1 to 23 (MLSPTNSISKTVPAPPQDSSKPV) is disordered. A helical membrane pass occupies residues 40–60 (TALAVLLVVVTLGLILLFYSF). The segment at 75 to 145 (STKEHPTISI…LPPKAPKPVK (71 aa)) is disordered. A compositionally biased stretch (pro residues) spans 86-141 (EPLPSPPLAVPRPSTPPPPVISRPSTPPAPTPAISPPSTPSAPKPSTPPPLPPKAP). Residues H288, D305, and C358 contribute to the active site.

The protein belongs to the peptidase C48 family.

The protein localises to the secreted. The protein resides in the host cell. Its subcellular location is the membrane. In terms of biological role, effector proteins function to alter host cell physiology and promote bacterial survival in host tissues. This protease possesses deubiquitinating and deneddylating activities. This chain is Deubiquitinase and deneddylase Dub1 (cdu1), found in Chlamydia trachomatis serovar A (strain ATCC VR-571B / DSM 19440 / HAR-13).